A 191-amino-acid polypeptide reads, in one-letter code: Calcium-activated potassium channel subunit beta-1 (191 aa).

At 1–18 (MGKKLVMAQKRGETRALC) the chain is on the cytoplasmic side. Residues 19–39 (LGVAMVVCAAITYYVLGTTVL) traverse the membrane as a helical segment. The Extracellular portion of the chain corresponds to 40-155 (PLYQKSVWTQ…VVYQRLYGPQ (116 aa)). 2 N-linked (GlcNAc...) asparagine glycosylation sites follow: asparagine 80 and asparagine 142. The chain crosses the membrane as a helical span at residues 156–176 (VLLFSFFWPTFLLTGGLLLIA). Residues 177–191 (MVKLNRSLSILAAQK) lie on the Cytoplasmic side of the membrane.

This sequence belongs to the KCNMB (TC 8.A.14.1) family. KCNMB1 subfamily. In terms of assembly, interacts with KCNMA1 tetramer. There are probably 4 molecules of KCMNB1 per KCNMA1 tetramer. In terms of processing, N-glycosylated. In terms of tissue distribution, expressed in many tissues containing smooth muscles. In brain and heart, it is not expressed except in the vasculature, such as cerebral arteries, aorta and corona arteries.

It localises to the membrane. Regulatory subunit of the calcium activated potassium KCNMA1 (maxiK) channel. Modulates the calcium sensitivity and gating kinetics of KCNMA1, thereby contributing to KCNMA1 channel diversity. Increases the apparent Ca(2+)/voltage sensitivity of the KCNMA1 channel. It also modifies KCNMA1 channel kinetics and alters its pharmacological properties. It slows down the activation and the deactivation kinetics of the channel. Acts as a negative regulator of smooth muscle contraction by enhancing the calcium sensitivity to KCNMA1. Its presence is also a requirement for internal binding of the KCNMA1 channel opener dehydrosoyasaponin I (DHS-1) triterpene glycoside and for external binding of the agonist hormone 17-beta-estradiol (E2). Increases the binding activity of charybdotoxin (CTX) toxin to KCNMA1 peptide blocker by increasing the CTX association rate and decreasing the dissociation rate. In Mus musculus (Mouse), this protein is Calcium-activated potassium channel subunit beta-1 (Kcnmb1).